The sequence spans 412 residues: DnaJ homolog subfamily A member 2 (412 aa).

The 63-residue stretch at 8-70 (KLYDILGVPP…EKRELYDRYG (63 aa)) folds into the J domain. Lys39 is modified (N6-acetyllysine). Phosphoserine is present on residues Ser78 and Ser123. Residues 130 to 214 (GKTTKLQLSK…CEGKKVIKEV (85 aa)) form a CR-type zinc finger. Lys134 participates in a covalent cross-link: Glycyl lysine isopeptide (Lys-Gly) (interchain with G-Cter in SUMO2). Zn(2+) is bound by residues Cys143 and Cys146. Residues 143 to 150 (CSACSGQG) form a CXXCXGXG motif repeat. Lys152 carries the post-translational modification N6-acetyllysine. Residues Cys159, Cys162, Cys186, Cys189, Cys202, and Cys205 each coordinate Zn(2+). CXXCXGXG motif repeat units lie at residues 159 to 166 (CSACRGRG), 186 to 193 (CSDCNGEG), and 202 to 209 (CKKCEGKK). The interval 359–412 (PEVPNIIGDTEEVELQEFDSTRGSGGGQRREAYNDSSDEESSSHHGPGVQCAHQ) is disordered. At Tyr391 the chain carries Phosphotyrosine. A phosphoserine mark is found at Ser394 and Ser395. Cys409 carries the cysteine methyl ester modification. Cys409 is lipidated: S-farnesyl cysteine. Residues 410–412 (AHQ) constitute a propeptide, removed in mature form.

It is found in the membrane. In terms of biological role, co-chaperone of Hsc70. Stimulates ATP hydrolysis and the folding of unfolded proteins mediated by HSPA1A/B (in vitro). This Bos taurus (Bovine) protein is DnaJ homolog subfamily A member 2 (DNAJA2).